A 402-amino-acid chain; its full sequence is Tryptophan synthase beta chain (402 aa).

The residue at position 91 (Lys91) is an N6-(pyridoxal phosphate)lysine.

Belongs to the TrpB family. As to quaternary structure, tetramer of two alpha and two beta chains. The cofactor is pyridoxal 5'-phosphate.

The catalysed reaction is (1S,2R)-1-C-(indol-3-yl)glycerol 3-phosphate + L-serine = D-glyceraldehyde 3-phosphate + L-tryptophan + H2O. It functions in the pathway amino-acid biosynthesis; L-tryptophan biosynthesis; L-tryptophan from chorismate: step 5/5. In terms of biological role, the beta subunit is responsible for the synthesis of L-tryptophan from indole and L-serine. This Streptococcus thermophilus (strain ATCC BAA-250 / LMG 18311) protein is Tryptophan synthase beta chain.